The following is a 106-amino-acid chain: Large ribosomal subunit protein eL42 (106 aa).

The disordered stretch occupies residues 37–56 (SQGKRRYDRKQSGYGGQTKP).

The protein belongs to the eukaryotic ribosomal protein eL42 family.

This is Large ribosomal subunit protein eL42 (RPL44) from Pichia kudriavzevii (Yeast).